The chain runs to 441 residues: Glutamate--tRNA ligase 2 (441 aa).

A 'HIGH' region motif is present at residues 6-16; that stretch reads PSPTGDMHIGN. Residues 231–235 carry the 'KMSKS' region motif; the sequence is KMSKR. ATP is bound at residue K234.

It belongs to the class-I aminoacyl-tRNA synthetase family. Glutamate--tRNA ligase type 1 subfamily. In terms of assembly, monomer.

It is found in the cytoplasm. The enzyme catalyses tRNA(Glu) + L-glutamate + ATP = L-glutamyl-tRNA(Glu) + AMP + diphosphate. In terms of biological role, catalyzes the attachment of glutamate to tRNA(Glu) in a two-step reaction: glutamate is first activated by ATP to form Glu-AMP and then transferred to the acceptor end of tRNA(Glu). This is Glutamate--tRNA ligase 2 from Helicobacter hepaticus (strain ATCC 51449 / 3B1).